The following is a 166-amino-acid chain: Disulfide bond formation protein B (166 aa).

The Cytoplasmic segment spans residues 1-10 (MGLNITNRQG). The chain crosses the membrane as a helical span at residues 11-27 (FLLVAAACAGAIGFALF). Topologically, residues 28–45 (AQYQLGEEPCPLCILQRI) are periplasmic. Cysteine 37 and cysteine 40 are disulfide-bonded. Residues 46–62 (GVMAVGALALLAALHNP) traverse the membrane as a helical segment. The Cytoplasmic segment spans residues 63 to 69 (GKTGAKV). A helical membrane pass occupies residues 70–86 (WGGLMTLAALSGAGVSL). The Periplasmic segment spans residues 87 to 143 (RQLWLQSLPADQVPQCGPGLEFLMESFPLWEVLSKVLKGSGECAAIQGRFLGMTMPF). Cysteines 102 and 129 form a disulfide. A helical transmembrane segment spans residues 144–162 (WVAVFFAGVIVWTLWLVGR). Residues 163–166 (RRRG) lie on the Cytoplasmic side of the membrane.

This sequence belongs to the DsbB family.

Its subcellular location is the cell inner membrane. Its function is as follows. Required for disulfide bond formation in some periplasmic proteins. Acts by oxidizing the DsbA protein. This Chromobacterium violaceum (strain ATCC 12472 / DSM 30191 / JCM 1249 / CCUG 213 / NBRC 12614 / NCIMB 9131 / NCTC 9757 / MK) protein is Disulfide bond formation protein B.